A 152-amino-acid polypeptide reads, in one-letter code: Protein Turandot X (152 aa).

A signal peptide spans 1–22; that stretch reads MGFYISSLLICVFLGIVRFASA.

It belongs to the Turandot family.

It is found in the secreted. A humoral factor that may play a role in stress tolerance. This is Protein Turandot X from Drosophila erecta (Fruit fly).